Reading from the N-terminus, the 291-residue chain is G1/S-specific cyclin-D1 (291 aa).

Thr282 carries the phosphothreonine modification.

This sequence belongs to the cyclin family. Cyclin D subfamily. As to quaternary structure, interacts with the CDK4 and CDK6 protein kinases to form a serine/threonine kinase holoenzyme complex. The cyclin subunit imparts substrate specificity to the complex. In terms of processing, phosphorylation at Thr-282 by MAP kinases is required for ubiquitination and degradation by the DCX(AMBRA1) complex. Post-translationally, ubiquitinated by the DCX(AMBRA1) complex during the transition from G1 to S cell phase, leading to its degradation. The DCX(AMBRA1) complex represents the major regulator of CCND1 stability during the G1/S transition.

The protein localises to the nucleus. It localises to the cytoplasm. Regulatory component of the cyclin D1-CDK4 (DC) complex that phosphorylates and inhibits members of the retinoblastoma (RB) protein family including RB1 and regulates the cell-cycle during G(1)/S transition. Phosphorylation of RB1 allows dissociation of the transcription factor E2F from the RB/E2F complex and the subsequent transcription of E2F target genes which are responsible for the progression through the G(1) phase. Hypophosphorylates RB1 in early G(1) phase. Cyclin D-CDK4 complexes are major integrators of various mitogenenic and antimitogenic signals. The protein is G1/S-specific cyclin-D1 (ccnd1) of Danio rerio (Zebrafish).